Reading from the N-terminus, the 341-residue chain is Glycerol-3-phosphate dehydrogenase [NAD(P)+] (341 aa).

The NADPH site is built by Ser-14, Phe-15, Arg-35, and Lys-108. Sn-glycerol 3-phosphate-binding residues include Lys-108 and Gly-136. Ala-140 contributes to the NADPH binding site. Sn-glycerol 3-phosphate-binding residues include Lys-191, Asp-244, Ser-254, Arg-255, and Asn-256. Residue Lys-191 is the Proton acceptor of the active site. Position 255 (Arg-255) interacts with NADPH. Residues Val-279 and Glu-281 each contribute to the NADPH site.

The protein belongs to the NAD-dependent glycerol-3-phosphate dehydrogenase family.

It localises to the cytoplasm. The catalysed reaction is sn-glycerol 3-phosphate + NAD(+) = dihydroxyacetone phosphate + NADH + H(+). It carries out the reaction sn-glycerol 3-phosphate + NADP(+) = dihydroxyacetone phosphate + NADPH + H(+). The protein operates within membrane lipid metabolism; glycerophospholipid metabolism. Functionally, catalyzes the reduction of the glycolytic intermediate dihydroxyacetone phosphate (DHAP) to sn-glycerol 3-phosphate (G3P), the key precursor for phospholipid synthesis. This chain is Glycerol-3-phosphate dehydrogenase [NAD(P)+], found in Pseudomonas syringae pv. tomato (strain ATCC BAA-871 / DC3000).